Reading from the N-terminus, the 192-residue chain is Fe/S biogenesis protein NfuA (192 aa).

Cysteine 150 and cysteine 153 together coordinate [4Fe-4S] cluster.

This sequence belongs to the NfuA family. In terms of assembly, homodimer. Requires [4Fe-4S] cluster as cofactor.

In terms of biological role, involved in iron-sulfur cluster biogenesis. Binds a 4Fe-4S cluster, can transfer this cluster to apoproteins, and thereby intervenes in the maturation of Fe/S proteins. Could also act as a scaffold/chaperone for damaged Fe/S proteins. This is Fe/S biogenesis protein NfuA from Buchnera aphidicola subsp. Acyrthosiphon pisum (strain APS) (Acyrthosiphon pisum symbiotic bacterium).